The sequence spans 95 residues: Aspartyl/glutamyl-tRNA(Asn/Gln) amidotransferase subunit C (95 aa).

The protein belongs to the GatC family. In terms of assembly, heterotrimer of A, B and C subunits.

The enzyme catalyses L-glutamyl-tRNA(Gln) + L-glutamine + ATP + H2O = L-glutaminyl-tRNA(Gln) + L-glutamate + ADP + phosphate + H(+). The catalysed reaction is L-aspartyl-tRNA(Asn) + L-glutamine + ATP + H2O = L-asparaginyl-tRNA(Asn) + L-glutamate + ADP + phosphate + 2 H(+). Functionally, allows the formation of correctly charged Asn-tRNA(Asn) or Gln-tRNA(Gln) through the transamidation of misacylated Asp-tRNA(Asn) or Glu-tRNA(Gln) in organisms which lack either or both of asparaginyl-tRNA or glutaminyl-tRNA synthetases. The reaction takes place in the presence of glutamine and ATP through an activated phospho-Asp-tRNA(Asn) or phospho-Glu-tRNA(Gln). The sequence is that of Aspartyl/glutamyl-tRNA(Asn/Gln) amidotransferase subunit C from Pseudomonas paraeruginosa (strain DSM 24068 / PA7) (Pseudomonas aeruginosa (strain PA7)).